The chain runs to 824 residues: Leucine--tRNA ligase (824 aa).

The 'HIGH' region signature appears at 42–52; that stretch reads PYPSGRIHMGH. The short motif at 581–585 is the 'KMSKS' region element; it reads KMSKS. Lys-584 contacts ATP.

Belongs to the class-I aminoacyl-tRNA synthetase family.

It is found in the cytoplasm. It catalyses the reaction tRNA(Leu) + L-leucine + ATP = L-leucyl-tRNA(Leu) + AMP + diphosphate. The polypeptide is Leucine--tRNA ligase (Geotalea daltonii (strain DSM 22248 / JCM 15807 / FRC-32) (Geobacter daltonii)).